We begin with the raw amino-acid sequence, 319 residues long: ATP-dependent 6-phosphofructokinase (319 aa).

Gly-11 provides a ligand contact to ATP. Position 21-25 (Arg-21–Arg-25) interacts with ADP. ATP-binding positions include Arg-72–Cys-73 and Gly-102–Ser-105. Asp-103 contacts Mg(2+). Thr-125–Asp-127 contacts substrate. Catalysis depends on Asp-127, which acts as the Proton acceptor. Arg-154 contributes to the ADP binding site. Met-169–Arg-171 contributes to the substrate binding site. Residues Gly-185 to Glu-187, Arg-211, and Lys-213 to His-215 contribute to the ADP site. Substrate-binding positions include Glu-222, Arg-243, and His-249–Arg-252.

Belongs to the phosphofructokinase type A (PFKA) family. ATP-dependent PFK group I subfamily. Prokaryotic clade 'B1' sub-subfamily. As to quaternary structure, homotetramer. The cofactor is Mg(2+).

It is found in the cytoplasm. The enzyme catalyses beta-D-fructose 6-phosphate + ATP = beta-D-fructose 1,6-bisphosphate + ADP + H(+). It functions in the pathway carbohydrate degradation; glycolysis; D-glyceraldehyde 3-phosphate and glycerone phosphate from D-glucose: step 3/4. Its activity is regulated as follows. Allosterically activated by ADP and other diphosphonucleosides, and allosterically inhibited by phosphoenolpyruvate. Its function is as follows. Catalyzes the phosphorylation of D-fructose 6-phosphate to fructose 1,6-bisphosphate by ATP, the first committing step of glycolysis. The protein is ATP-dependent 6-phosphofructokinase of Lysinibacillus sphaericus (Bacillus sphaericus).